Reading from the N-terminus, the 329-residue chain is Urease accessory protein UreD 2 (329 aa).

The disordered stretch occupies residues 100-120 (YSRPSDSSKFTNGTQSANSNT). Polar residues predominate over residues 103 to 120 (PSDSSKFTNGTQSANSNT).

This sequence belongs to the UreD family. UreD, UreF and UreG form a complex that acts as a GTP-hydrolysis-dependent molecular chaperone, activating the urease apoprotein by helping to assemble the nickel containing metallocenter of UreC. The UreE protein probably delivers the nickel.

The protein localises to the cytoplasm. Functionally, required for maturation of urease via the functional incorporation of the urease nickel metallocenter. The chain is Urease accessory protein UreD 2 from Psychrobacter cryohalolentis (strain ATCC BAA-1226 / DSM 17306 / VKM B-2378 / K5).